The following is a 75-amino-acid chain: MARYFRRRKFCRFTAEGVTEIDYKDIVTLKNYITESGKIVPSRITGTNAKYQRQLARAIKRARYLSLLPYTDLHQ.

This sequence belongs to the bacterial ribosomal protein bS18 family. Part of the 30S ribosomal subunit. Forms a tight heterodimer with protein bS6.

Binds as a heterodimer with protein bS6 to the central domain of the 16S rRNA, where it helps stabilize the platform of the 30S subunit. This Shewanella halifaxensis (strain HAW-EB4) protein is Small ribosomal subunit protein bS18.